We begin with the raw amino-acid sequence, 209 residues long: FMN-dependent NADH:quinone oxidoreductase (209 aa).

FMN contacts are provided by residues serine 9, 19 to 21 (SVS), and 143 to 146 (TRGG).

The protein belongs to the azoreductase type 1 family. In terms of assembly, homodimer. FMN serves as cofactor.

The catalysed reaction is 2 a quinone + NADH + H(+) = 2 a 1,4-benzosemiquinone + NAD(+). The enzyme catalyses N,N-dimethyl-1,4-phenylenediamine + anthranilate + 2 NAD(+) = 2-(4-dimethylaminophenyl)diazenylbenzoate + 2 NADH + 2 H(+). Its function is as follows. Quinone reductase that provides resistance to thiol-specific stress caused by electrophilic quinones. In terms of biological role, also exhibits azoreductase activity. Catalyzes the reductive cleavage of the azo bond in aromatic azo compounds to the corresponding amines. This Leptothrix cholodnii (strain ATCC 51168 / LMG 8142 / SP-6) (Leptothrix discophora (strain SP-6)) protein is FMN-dependent NADH:quinone oxidoreductase.